The following is a 698-amino-acid chain: Polyribonucleotide nucleotidyltransferase (698 aa).

Positions 490 and 496 each coordinate Mg(2+). Residues 557–616 (PKVVTMTIKPDKIRDVIGPGGKKINEIIDETGVKLDIEQDGTIFIGAVDQAMINRAREII) form the KH domain. Residues 626–694 (GQTYQATVKR…KQGRVNASHR (69 aa)) enclose the S1 motif domain.

It belongs to the polyribonucleotide nucleotidyltransferase family. The cofactor is Mg(2+).

It is found in the cytoplasm. The enzyme catalyses RNA(n+1) + phosphate = RNA(n) + a ribonucleoside 5'-diphosphate. Involved in mRNA degradation. Catalyzes the phosphorolysis of single-stranded polyribonucleotides processively in the 3'- to 5'-direction. The polypeptide is Polyribonucleotide nucleotidyltransferase (Staphylococcus aureus (strain bovine RF122 / ET3-1)).